The chain runs to 565 residues: DNA repair protein RAD7 (565 aa).

2 disordered regions span residues 1-22 (MYRS…PNSA) and 41-68 (WYQR…FTAE). The tract at residues 1–200 (MYRSRNRPKR…SKLVFNKLRD (200 aa)) is hydrophilic. Basic and acidic residues predominate over residues 47 to 62 (KKQEDATDEKKGKAED). Phosphoserine is present on residues serine 64 and serine 85. The interval 105-137 (ADSDEEEYETSHISDTPVSLSSANDRESLTKKR) is disordered. Positions 115–127 (SHISDTPVSLSSA) are enriched in polar residues.

The protein to S.pombe SpCC613.14. As to quaternary structure, component of the global genome repair (GGR) complex composed of at least ABF1, RAD7 and RAD16. Interacts with ELC1.

Functionally, component of the global genome repair (GGR) complex which promotes global genome nucleotide excision repair (GG-NER) which removes DNA damage from nontranscribing DNA. This protein is one of 10 proteins (RAD1, 2,3,4,7,10,14, 16,23 and MMS19) involved in excision repair of DNA damaged with UV light, bulky adducts, or cross-linking agents. In Saccharomyces cerevisiae (strain ATCC 204508 / S288c) (Baker's yeast), this protein is DNA repair protein RAD7 (RAD7).